We begin with the raw amino-acid sequence, 312 residues long: Glyoxylate/hydroxypyruvate reductase A (312 aa).

R227 is a catalytic residue. H275 serves as the catalytic Proton donor.

Belongs to the D-isomer specific 2-hydroxyacid dehydrogenase family. GhrA subfamily.

It localises to the cytoplasm. The enzyme catalyses glycolate + NADP(+) = glyoxylate + NADPH + H(+). The catalysed reaction is (R)-glycerate + NAD(+) = 3-hydroxypyruvate + NADH + H(+). It catalyses the reaction (R)-glycerate + NADP(+) = 3-hydroxypyruvate + NADPH + H(+). Functionally, catalyzes the NADPH-dependent reduction of glyoxylate and hydroxypyruvate into glycolate and glycerate, respectively. The protein is Glyoxylate/hydroxypyruvate reductase A of Salmonella dublin (strain CT_02021853).